Here is a 93-residue protein sequence, read N- to C-terminus: Large ribosomal subunit protein bL27 (93 aa).

Positions 1 to 9 (MIKINLQLF) are excised as a propeptide.

It belongs to the bacterial ribosomal protein bL27 family. The N-terminus is cleaved by ribosomal processing cysteine protease Prp.

This Ruminiclostridium cellulolyticum (strain ATCC 35319 / DSM 5812 / JCM 6584 / H10) (Clostridium cellulolyticum) protein is Large ribosomal subunit protein bL27.